We begin with the raw amino-acid sequence, 409 residues long: Na(+)-translocating NADH-quinone reductase subunit F (409 aa).

A helical membrane pass occupies residues 5 to 25 (FIFGIGAFTAIVLVLAVVILI). One can recognise a 2Fe-2S ferredoxin-type domain in the interval 34–128 (GDITISINDD…SMDVELPEEV (95 aa)). Residues Cys-71, Cys-77, Cys-80, and Cys-112 each coordinate [2Fe-2S] cluster. The 141-residue stretch at 131-271 (VKKWECTVIS…SGPFGEFFAK (141 aa)) folds into the FAD-binding FR-type domain.

It belongs to the NqrF family. Composed of six subunits; NqrA, NqrB, NqrC, NqrD, NqrE and NqrF. [2Fe-2S] cluster serves as cofactor. It depends on FAD as a cofactor.

It is found in the cell inner membrane. It catalyses the reaction a ubiquinone + n Na(+)(in) + NADH + H(+) = a ubiquinol + n Na(+)(out) + NAD(+). Its function is as follows. NQR complex catalyzes the reduction of ubiquinone-1 to ubiquinol by two successive reactions, coupled with the transport of Na(+) ions from the cytoplasm to the periplasm. The first step is catalyzed by NqrF, which accepts electrons from NADH and reduces ubiquinone-1 to ubisemiquinone by a one-electron transfer pathway. This Actinobacillus succinogenes (strain ATCC 55618 / DSM 22257 / CCUG 43843 / 130Z) protein is Na(+)-translocating NADH-quinone reductase subunit F.